Here is a 364-residue protein sequence, read N- to C-terminus: DNA polymerase IV (364 aa).

The UmuC domain maps to 14–198; it reads IIHIDMDAFF…LPIEKFHGVG (185 aa). Mg(2+) contacts are provided by D18 and D116. E117 is an active-site residue.

Belongs to the DNA polymerase type-Y family. As to quaternary structure, monomer. Mg(2+) serves as cofactor.

The protein resides in the cytoplasm. The enzyme catalyses DNA(n) + a 2'-deoxyribonucleoside 5'-triphosphate = DNA(n+1) + diphosphate. Its function is as follows. Poorly processive, error-prone DNA polymerase involved in untargeted mutagenesis. Copies undamaged DNA at stalled replication forks, which arise in vivo from mismatched or misaligned primer ends. These misaligned primers can be extended by PolIV. Exhibits no 3'-5' exonuclease (proofreading) activity. May be involved in translesional synthesis, in conjunction with the beta clamp from PolIII. The chain is DNA polymerase IV from Streptococcus pyogenes serotype M12 (strain MGAS2096).